The primary structure comprises 58 residues: UPF0434 protein Swoo_1821 (58 aa).

Belongs to the UPF0434 family.

This Shewanella woodyi (strain ATCC 51908 / MS32) protein is UPF0434 protein Swoo_1821.